Consider the following 347-residue polypeptide: N-acetyl-gamma-glutamyl-phosphate reductase (347 aa).

Cys-153 is a catalytic residue.

It belongs to the NAGSA dehydrogenase family. Type 1 subfamily.

It is found in the cytoplasm. The catalysed reaction is N-acetyl-L-glutamate 5-semialdehyde + phosphate + NADP(+) = N-acetyl-L-glutamyl 5-phosphate + NADPH + H(+). The protein operates within amino-acid biosynthesis; L-arginine biosynthesis; N(2)-acetyl-L-ornithine from L-glutamate: step 3/4. In terms of biological role, catalyzes the NADPH-dependent reduction of N-acetyl-5-glutamyl phosphate to yield N-acetyl-L-glutamate 5-semialdehyde. In Mycobacterium avium (strain 104), this protein is N-acetyl-gamma-glutamyl-phosphate reductase.